Here is a 450-residue protein sequence, read N- to C-terminus: Phosphoglucosamine mutase (450 aa).

Catalysis depends on S102, which acts as the Phosphoserine intermediate. Mg(2+)-binding residues include S102, D244, D246, and D248. Residue S102 is modified to Phosphoserine.

Belongs to the phosphohexose mutase family. Requires Mg(2+) as cofactor. In terms of processing, activated by phosphorylation.

It catalyses the reaction alpha-D-glucosamine 1-phosphate = D-glucosamine 6-phosphate. Catalyzes the conversion of glucosamine-6-phosphate to glucosamine-1-phosphate. This Syntrophomonas wolfei subsp. wolfei (strain DSM 2245B / Goettingen) protein is Phosphoglucosamine mutase.